The sequence spans 118 residues: Putative pterin-4-alpha-carbinolamine dehydratase (118 aa).

It belongs to the pterin-4-alpha-carbinolamine dehydratase family.

It carries out the reaction (4aS,6R)-4a-hydroxy-L-erythro-5,6,7,8-tetrahydrobiopterin = (6R)-L-erythro-6,7-dihydrobiopterin + H2O. This Xanthomonas euvesicatoria pv. vesicatoria (strain 85-10) (Xanthomonas campestris pv. vesicatoria) protein is Putative pterin-4-alpha-carbinolamine dehydratase.